Reading from the N-terminus, the 135-residue chain is MAQAFQFELVSPERLLLSAQVTEVVIPGNEGYLTALAGHSPLMTTIMPGVVSVKLADGKTDSYVVFGGFADITPQGCTVLAESATHVDDIDPADIQHRIDHARKVLEDASSNEHRTKAEIFLHQLMTLQGAILPA.

The protein belongs to the ATPase epsilon chain family. As to quaternary structure, F-type ATPases have 2 components, CF(1) - the catalytic core - and CF(0) - the membrane proton channel. CF(1) has five subunits: alpha(3), beta(3), gamma(1), delta(1), epsilon(1). CF(0) has three main subunits: a, b and c.

It localises to the cell inner membrane. Produces ATP from ADP in the presence of a proton gradient across the membrane. The polypeptide is ATP synthase epsilon chain (Brucella suis (strain ATCC 23445 / NCTC 10510)).